The following is a 211-amino-acid chain: Arginine exporter protein ArgO (211 aa).

6 helical membrane passes run 1–21 (MFTY…PLGP), 37–57 (LMIA…GIFG), 68–88 (LLAL…FGAL), 111–131 (IIIT…DTFV), 147–167 (WFAL…ALLA), and 179–199 (AQRI…FQLA).

The protein belongs to the LysE/ArgO transporter (TC 2.A.75) family.

Its subcellular location is the cell inner membrane. The enzyme catalyses L-arginine(in) = L-arginine(out). Its function is as follows. Involved in the export of arginine. Important to control the intracellular level of arginine and the correct balance between arginine and lysine. This Klebsiella pneumoniae subsp. pneumoniae (strain ATCC 700721 / MGH 78578) protein is Arginine exporter protein ArgO.